Reading from the N-terminus, the 221-residue chain is Zingipain-2 (221 aa).

2 disulfide bridges follow: C24–C65 and C58–C98. C27 is a catalytic residue. 2 N-linked (GlcNAc...) asparagine glycosylation sites follow: N99 and N156. A disulfide bridge connects residues C155 and C206. H161 is a catalytic residue.

The protein belongs to the peptidase C1 family.

The enzyme catalyses Preferential cleavage of peptides with a proline residue at the P2 position.. Its function is as follows. Cysteine proteinase with a specific activity toward peptides with a proline residue at the P2 position. The sequence is that of Zingipain-2 from Zingiber officinale (Ginger).